Reading from the N-terminus, the 307-residue chain is N-acetylmuramic acid 6-phosphate etherase (307 aa).

In terms of domain architecture, SIS spans 62–225; the sequence is IVLAFQKGAR…TTASMIRIGK (164 aa). The active-site Proton donor is Glu90. Glu121 is a catalytic residue.

It belongs to the GCKR-like family. MurNAc-6-P etherase subfamily. In terms of assembly, homodimer.

It catalyses the reaction N-acetyl-D-muramate 6-phosphate + H2O = N-acetyl-D-glucosamine 6-phosphate + (R)-lactate. It functions in the pathway amino-sugar metabolism; 1,6-anhydro-N-acetylmuramate degradation. Its pathway is amino-sugar metabolism; N-acetylmuramate degradation. The protein operates within cell wall biogenesis; peptidoglycan recycling. Its function is as follows. Specifically catalyzes the cleavage of the D-lactyl ether substituent of MurNAc 6-phosphate, producing GlcNAc 6-phosphate and D-lactate. Together with AnmK, is also required for the utilization of anhydro-N-acetylmuramic acid (anhMurNAc) either imported from the medium or derived from its own cell wall murein, and thus plays a role in cell wall recycling. The protein is N-acetylmuramic acid 6-phosphate etherase of Mesorhizobium japonicum (strain LMG 29417 / CECT 9101 / MAFF 303099) (Mesorhizobium loti (strain MAFF 303099)).